Reading from the N-terminus, the 364-residue chain is Aminomethyltransferase (364 aa).

This sequence belongs to the GcvT family. The glycine cleavage system is composed of four proteins: P, T, L and H.

The enzyme catalyses N(6)-[(R)-S(8)-aminomethyldihydrolipoyl]-L-lysyl-[protein] + (6S)-5,6,7,8-tetrahydrofolate = N(6)-[(R)-dihydrolipoyl]-L-lysyl-[protein] + (6R)-5,10-methylene-5,6,7,8-tetrahydrofolate + NH4(+). Its function is as follows. The glycine cleavage system catalyzes the degradation of glycine. In Escherichia coli O127:H6 (strain E2348/69 / EPEC), this protein is Aminomethyltransferase.